Here is a 178-residue protein sequence, read N- to C-terminus: uncharacterized protein (178 aa).

A run of 4 helical transmembrane segments spans residues 29-49 (AATGFCGGVLWSFVAYIAYLF), 76-96 (VISIILIGVISIGAAFLYFLL), 105-125 (PGILYGLVLWLLVFFVFNPIF), and 139-159 (IITTICIYLLYGLFVGYSISF).

The protein resides in the cell membrane. This is an uncharacterized protein from Bacillus subtilis (strain 168).